We begin with the raw amino-acid sequence, 69 residues long: Large ribosomal subunit protein eL38 (69 aa).

The protein belongs to the eukaryotic ribosomal protein eL38 family.

This is Large ribosomal subunit protein eL38 (RPL38) from Solanum lycopersicum (Tomato).